We begin with the raw amino-acid sequence, 912 residues long: Protein translocase subunit SecA (912 aa).

ATP-binding positions include Gln-87, 105–109, and Asp-510; that span reads GEGKT. The disordered stretch occupies residues 854–912; sequence KLRHEQASAAQAEGEGDDGQQGQQATPETFVRQERKVGRNEPCPCGSGKKYKQCCGKVS. Zn(2+)-binding residues include Cys-896, Cys-898, Cys-907, and Cys-908.

This sequence belongs to the SecA family. In terms of assembly, monomer and homodimer. Part of the essential Sec protein translocation apparatus which comprises SecA, SecYEG and auxiliary proteins SecDF-YajC and YidC. Requires Zn(2+) as cofactor.

Its subcellular location is the cell inner membrane. The protein localises to the cytoplasm. The catalysed reaction is ATP + H2O + cellular proteinSide 1 = ADP + phosphate + cellular proteinSide 2.. Part of the Sec protein translocase complex. Interacts with the SecYEG preprotein conducting channel. Has a central role in coupling the hydrolysis of ATP to the transfer of proteins into and across the cell membrane, serving both as a receptor for the preprotein-SecB complex and as an ATP-driven molecular motor driving the stepwise translocation of polypeptide chains across the membrane. The protein is Protein translocase subunit SecA of Marinobacter nauticus (strain ATCC 700491 / DSM 11845 / VT8) (Marinobacter aquaeolei).